Reading from the N-terminus, the 536-residue chain is Phosphoenolpyruvate carboxykinase (ATP) (536 aa).

Positions 61, 195, and 201 each coordinate substrate. ATP-binding positions include K201, H220, and 236–244 (GLSGTGKTT). The Mn(2+) site is built by K201 and H220. D257 contacts Mn(2+). Residues E285, R322, and T447 each coordinate ATP. R322 serves as a coordination point for substrate.

This sequence belongs to the phosphoenolpyruvate carboxykinase (ATP) family. It depends on Mn(2+) as a cofactor.

The protein resides in the cytoplasm. The enzyme catalyses oxaloacetate + ATP = phosphoenolpyruvate + ADP + CO2. It functions in the pathway carbohydrate biosynthesis; gluconeogenesis. Involved in the gluconeogenesis. Catalyzes the conversion of oxaloacetate (OAA) to phosphoenolpyruvate (PEP) through direct phosphoryl transfer between the nucleoside triphosphate and OAA. This is Phosphoenolpyruvate carboxykinase (ATP) from Rhizobium johnstonii (strain DSM 114642 / LMG 32736 / 3841) (Rhizobium leguminosarum bv. viciae).